The chain runs to 151 residues: Chromophore lyase CpcS/CpeS homolog (151 aa).

It belongs to the CpcS/CpeS biliprotein lyase family.

Its subcellular location is the plastid. The protein localises to the chloroplast. Functionally, might function to covalently attach a chromophore to Cys residue(s) of phycobiliproteins. This is Chromophore lyase CpcS/CpeS homolog from Gracilaria tenuistipitata var. liui (Red alga).